The following is a 425-amino-acid chain: Cytokine receptor-like factor 1 (425 aa).

The first 33 residues, 1 to 33 (MPAGRPGPVAQSARRPPRPLSSLWSPLLLCVLG), serve as a signal peptide directing secretion. An Ig-like C2-type domain is found at 35-134 (PRGGSGAHTA…SILAGSCLYV (100 aa)). N-linked (GlcNAc...) asparagine glycosylation is found at asparagine 95, asparagine 107, and asparagine 143. 2 Fibronectin type-III domains span residues 140-235 (KPFN…VLDV) and 240-344 (PPPD…TPRS). Cysteine 146 and cysteine 156 form a disulfide bridge. An N-linked (GlcNAc...) asparagine glycan is attached at asparagine 171. Cysteine 187 and cysteine 198 form a disulfide bridge. Residue serine 222 is modified to Phosphoserine. Residue asparagine 295 is glycosylated (N-linked (GlcNAc...) asparagine). The WSXWS motif signature appears at 330–334 (WSEWS). Residues 335 to 366 (HPTAASTPRSERPGPGGGVCEPRGGEPSSGPV) are disordered. A glycan (N-linked (GlcNAc...) asparagine) is linked at asparagine 385. Residues 402–425 (HKTRNQDEGILPSGRRGAARGPAG) are disordered. A compositionally biased stretch (low complexity) spans 415-425 (GRRGAARGPAG).

It belongs to the type I cytokine receptor family. Type 3 subfamily. As to quaternary structure, forms covalent di- and tetramers. Forms a heteromeric complex with cardiotrophin-like cytokine CLCF1/CLC; the CRLF1-CLCF1 complex is a ligand for the ciliary neurotrophic factor receptor/CNTFR. The CRLF1-CLCF1 heterodimer, as well as tripartite signaling complex formed by CRLF1, CLCF1 and CNTFR bind SORL1 (via N-terminal ectodomain); within this complex, the interaction is mediated predominantly by the CRLF1 moiety. As to expression, widely expressed in the embryo. Not detected in the brain of adult mice.

The protein resides in the secreted. Functionally, in complex with CLCF1, forms a heterodimeric neurotropic cytokine that plays a crucial role during neuronal development. Plays a role in the initiation and/or maintenance of suckling in neonatal mice. May also play a regulatory role in the immune system. In Mus musculus (Mouse), this protein is Cytokine receptor-like factor 1 (Crlf1).